The sequence spans 224 residues: MTALTPPQYEAELLQRAKSIAGLTFAELAEELNLVVPPDLKRDKGWVGMLIETALGATAGSKAEQDFSHLGIELKTIPVNQQGYPLETTFVSLAPLAQNSGVTWHSSHVRYKLSKVLWIPIEGERQIPLAERHVGVPILWQPSSSQEQRLRQDWEELMDYIVLGKLTEITARIGEVLQLRPKGANSRALTKGIGKNGEIIDTLPLGFYLRKEFTAEILHDFLMD.

This sequence belongs to the MutH family.

Its subcellular location is the cytoplasm. In terms of biological role, sequence-specific endonuclease that cleaves unmethylated GATC sequences. It is involved in DNA mismatch repair. The protein is DNA mismatch repair protein MutH of Histophilus somni (strain 129Pt) (Haemophilus somnus).